The chain runs to 84 residues: Cell division topological specificity factor (84 aa).

It belongs to the MinE family.

Its function is as follows. Prevents the cell division inhibition by proteins MinC and MinD at internal division sites while permitting inhibition at polar sites. This ensures cell division at the proper site by restricting the formation of a division septum at the midpoint of the long axis of the cell. The protein is Cell division topological specificity factor of Ralstonia pickettii (strain 12J).